We begin with the raw amino-acid sequence, 245 residues long: Small ribosomal subunit protein uS3 (245 aa).

A KH type-2 domain is found at 39–108; the sequence is IRNYIKKNYY…SVFVNVQEVK (70 aa).

This sequence belongs to the universal ribosomal protein uS3 family. As to quaternary structure, part of the 30S ribosomal subunit. Forms a tight complex with proteins S10 and S14.

Binds the lower part of the 30S subunit head. Binds mRNA in the 70S ribosome, positioning it for translation. The chain is Small ribosomal subunit protein uS3 from Dictyoglomus turgidum (strain DSM 6724 / Z-1310).